Here is a 99-residue protein sequence, read N- to C-terminus: MNKTELIKAIAQDTELTQVSVSKMLASFEKITTETVAKGDKVQLTGFLNIKPVARQARKGFNPQTQEALEIAPSVGVSVKPGESLKKAAEGLKYEDFAK.

May be involved in preference for HM-URA DNA stretches follow at residues proline 52 to valine 77 and glutamate 90 to lysine 99. 2 DNA-binding regions span residues phenylalanine 61 and lysine 93–tyrosine 94.

It belongs to the bacterial histone-like protein family. In terms of assembly, homodimer.

Selectively binds to and inhibits the transcription of hydroxymethyluracil-(hmUra)-containing DNA, such as SP01 DNA, by RNA polymerase in vitro. The chain is Transcription factor 1 (TF1) from Bacillus phage SP01 (Bacteriophage SP01).